A 277-amino-acid polypeptide reads, in one-letter code: F41 fimbrial protein (277 aa).

The signal sequence occupies residues 1 to 22; it reads MKKTLIALAVAASAAVSGSVMA.

Belongs to the fimbrial K88 protein family.

Its subcellular location is the fimbrium. In terms of biological role, fimbriae (also called pili), polar filaments radiating from the surface of the bacterium to a length of 0.5-1.5 micrometers and numbering 100-300 per cell, enable bacteria to colonize the epithelium of specific host organs. The chain is F41 fimbrial protein (FimF41a) from Escherichia coli.